A 314-amino-acid polypeptide reads, in one-letter code: Ribosomal protein L11 methyltransferase (314 aa).

4 residues coordinate S-adenosyl-L-methionine: threonine 163, glycine 184, aspartate 206, and asparagine 248.

Belongs to the methyltransferase superfamily. PrmA family.

The protein resides in the cytoplasm. The enzyme catalyses L-lysyl-[protein] + 3 S-adenosyl-L-methionine = N(6),N(6),N(6)-trimethyl-L-lysyl-[protein] + 3 S-adenosyl-L-homocysteine + 3 H(+). Functionally, methylates ribosomal protein L11. The sequence is that of Ribosomal protein L11 methyltransferase from Lactobacillus acidophilus (strain ATCC 700396 / NCK56 / N2 / NCFM).